The sequence spans 1183 residues: PAN2-PAN3 deadenylation complex catalytic subunit PAN2 (1183 aa).

WD repeat units follow at residues 150–189 (SIEN…KAAQ) and 289–328 (DVSS…ENAA). Positions 331–478 (ENGSIVLPPF…EEIEEELNDG (148 aa)) are linker. The tract at residues 439 to 470 (AEGRARGKGRRDSGPRFRSEKDKKGTYKDKEE) is disordered. Residues 448–469 (RRDSGPRFRSEKDKKGTYKDKE) show a composition bias toward basic and acidic residues. In terms of domain architecture, USP spans 479 to 864 (EVPKYYRKVE…VPAVIILERE (386 aa)). An Exonuclease domain is found at 916-1085 (VAIDAEFVAL…HDSIEDAHFA (170 aa)). A divalent metal cation contacts are provided by Asp919, Glu921, Asp1028, and Asp1081. Positions 1155-1183 (KSRMATPPPPTKLGLPQWASQNSPSPLRR) are disordered. Polar residues predominate over residues 1172–1183 (WASQNSPSPLRR).

Belongs to the peptidase C19 family. PAN2 subfamily. In terms of assembly, forms a heterotrimer with an asymmetric homodimer of the regulatory subunit PAN3 to form the poly(A)-nuclease (PAN) deadenylation complex. A divalent metal cation is required as a cofactor.

The protein resides in the cytoplasm. It catalyses the reaction Exonucleolytic cleavage of poly(A) to 5'-AMP.. Its activity is regulated as follows. Positively regulated by the regulatory subunit PAN3. Catalytic subunit of the poly(A)-nuclease (PAN) deadenylation complex, one of two cytoplasmic mRNA deadenylases involved in mRNA turnover. PAN specifically shortens poly(A) tails of RNA and the activity is stimulated by poly(A)-binding protein PAB1. PAN deadenylation is followed by rapid degradation of the shortened mRNA tails by the CCR4-NOT complex. Deadenylated mRNAs are then degraded by two alternative mechanisms, namely exosome-mediated 3'-5' exonucleolytic degradation, or deadenylation-dependent mRNA decaping and subsequent 5'-3' exonucleolytic degradation by XRN1. May also be involved in post-transcriptional maturation of mRNA poly(A) tails. This Cryptococcus neoformans var. neoformans serotype D (strain B-3501A) (Filobasidiella neoformans) protein is PAN2-PAN3 deadenylation complex catalytic subunit PAN2.